Consider the following 238-residue polypeptide: UPF0758 protein Ajs_3450 (238 aa).

The 123-residue stretch at 116–238 (VFDSPQAVQH…ALSMAEQGLV (123 aa)) folds into the MPN domain. 3 residues coordinate Zn(2+): His-187, His-189, and Asp-200. The short motif at 187-200 (HNHPSGSVQPSRAD) is the JAMM motif element.

The protein belongs to the UPF0758 family.

This is UPF0758 protein Ajs_3450 from Acidovorax sp. (strain JS42).